The primary structure comprises 102 residues: CRISPR-associated endoribonuclease Cas2 1 (102 aa).

A Mg(2+)-binding site is contributed by Asp-17.

Belongs to the CRISPR-associated endoribonuclease Cas2 protein family. As to quaternary structure, homodimer, forms a heterotetramer with a Cas1 homodimer. It depends on Mg(2+) as a cofactor.

CRISPR (clustered regularly interspaced short palindromic repeat), is an adaptive immune system that provides protection against mobile genetic elements (viruses, transposable elements and conjugative plasmids). CRISPR clusters contain sequences complementary to antecedent mobile elements and target invading nucleic acids. CRISPR clusters are transcribed and processed into CRISPR RNA (crRNA). Functions as a ssRNA-specific endoribonuclease. Involved in the integration of spacer DNA into the CRISPR cassette. The polypeptide is CRISPR-associated endoribonuclease Cas2 1 (Rhodospirillum rubrum (strain ATCC 11170 / ATH 1.1.1 / DSM 467 / LMG 4362 / NCIMB 8255 / S1)).